The sequence spans 515 residues: BURP domain-containing protein 9 (515 aa).

The signal sequence occupies residues 1 to 29 (MKATGGPLPLILFLLIIIVLITAQHTAIA). The 216-residue stretch at 292-507 (YFFEDNLAPG…GRGSIIWVPV (216 aa)) folds into the BURP domain. 3 N-linked (GlcNAc...) asparagine glycosylation sites follow: N321, N332, and N470.

As to expression, expressed in shoot and panicles.

The sequence is that of BURP domain-containing protein 9 (BURP9) from Oryza sativa subsp. japonica (Rice).